The following is a 33-amino-acid chain: NAD-reducing hydrogenase HoxS subunit gamma (33 aa).

Positions 1–33 (SIEIEIDGVTVTTEESRTLVDVAAEAGVYIPTL) constitute a 2Fe-2S ferredoxin-type domain.

Belongs to the complex I 75 kDa subunit family. Tetramer of an alpha and a gamma subunits (flavin-containing dimer), and a delta and a nickel-containing beta subunits (hydrogenase dimer). Requires [4Fe-4S] cluster as cofactor.

The protein resides in the cytoplasm. It carries out the reaction H2 + NAD(+) = NADH + H(+). Subunits alpha and gamma of HoxS constitute an NADH--oxidoreductase. The protein is NAD-reducing hydrogenase HoxS subunit gamma (hoxU) of Rhodococcus opacus (Nocardia opaca).